We begin with the raw amino-acid sequence, 132 residues long: Small ribosomal subunit protein uS9 (132 aa).

Belongs to the universal ribosomal protein uS9 family.

This Thermoplasma volcanium (strain ATCC 51530 / DSM 4299 / JCM 9571 / NBRC 15438 / GSS1) protein is Small ribosomal subunit protein uS9 (rps9).